The primary structure comprises 93 residues: uncharacterized protein (93 aa).

The signal sequence occupies residues Met-1–Ser-22.

This is an uncharacterized protein from Escherichia coli (strain K12).